We begin with the raw amino-acid sequence, 447 residues long: Tubulin beta chain (447 aa).

Positions 11, 69, 138, 142, 143, 144, 204, and 226 each coordinate GTP. Position 69 (Glu69) interacts with Mg(2+). Residues 425 to 447 are disordered; sequence YQDASISEGEEEYEEEVPIEGEE. Positions 432-447 are enriched in acidic residues; it reads EGEEEYEEEVPIEGEE.

Belongs to the tubulin family. In terms of assembly, dimer of alpha and beta chains. A typical microtubule is a hollow water-filled tube with an outer diameter of 25 nm and an inner diameter of 15 nM. Alpha-beta heterodimers associate head-to-tail to form protofilaments running lengthwise along the microtubule wall with the beta-tubulin subunit facing the microtubule plus end conferring a structural polarity. Microtubules usually have 13 protofilaments but different protofilament numbers can be found in some organisms and specialized cells. The cofactor is Mg(2+).

The protein localises to the cytoplasm. It localises to the cytoskeleton. Tubulin is the major constituent of microtubules, a cylinder consisting of laterally associated linear protofilaments composed of alpha- and beta-tubulin heterodimers. Microtubules grow by the addition of GTP-tubulin dimers to the microtubule end, where a stabilizing cap forms. Below the cap, tubulin dimers are in GDP-bound state, owing to GTPase activity of alpha-tubulin. In Botryotinia fuckeliana (Noble rot fungus), this protein is Tubulin beta chain (tubA).